Reading from the N-terminus, the 160-residue chain is Epithelial membrane protein 1 (160 aa).

The chain crosses the membrane as a helical span at residues 1–21 (MLVLLAAIFVVHIATCVMLFV). N-linked (GlcNAc...) asparagine glycosylation is found at N35 and N43. The next 3 helical transmembrane spans lie at 67-87 (FMIL…FQLF), 95-115 (FFLS…GASI), and 137-157 (FILA…YLVL).

This sequence belongs to the PMP-22/EMP/MP20 family. In terms of tissue distribution, most abundant in squamous epithelia.

The protein localises to the membrane. This is Epithelial membrane protein 1 (EMP1) from Oryctolagus cuniculus (Rabbit).